The following is a 271-amino-acid chain: Putative phosphoenolpyruvate synthase regulatory protein (271 aa).

151–158 (GVSRSGKT) provides a ligand contact to ADP.

Belongs to the pyruvate, phosphate/water dikinase regulatory protein family. PSRP subfamily.

The enzyme catalyses [pyruvate, water dikinase] + ADP = [pyruvate, water dikinase]-phosphate + AMP + H(+). The catalysed reaction is [pyruvate, water dikinase]-phosphate + phosphate + H(+) = [pyruvate, water dikinase] + diphosphate. Bifunctional serine/threonine kinase and phosphorylase involved in the regulation of the phosphoenolpyruvate synthase (PEPS) by catalyzing its phosphorylation/dephosphorylation. The polypeptide is Putative phosphoenolpyruvate synthase regulatory protein (Burkholderia multivorans (strain ATCC 17616 / 249)).